The primary structure comprises 874 residues: Valine--tRNA ligase (874 aa).

A 'HIGH' region motif is present at residues 46-56 (PNVTGHLHIGH). A 'KMSKS' region motif is present at residues 523–527 (KMSKS). Lys526 provides a ligand contact to ATP. A coiled-coil region spans residues 805–874 (DYVFQMKKAS…TLTDLKQKVK (70 aa)).

Belongs to the class-I aminoacyl-tRNA synthetase family. ValS type 1 subfamily. In terms of assembly, monomer.

It is found in the cytoplasm. The catalysed reaction is tRNA(Val) + L-valine + ATP = L-valyl-tRNA(Val) + AMP + diphosphate. Functionally, catalyzes the attachment of valine to tRNA(Val). As ValRS can inadvertently accommodate and process structurally similar amino acids such as threonine, to avoid such errors, it has a 'posttransfer' editing activity that hydrolyzes mischarged Thr-tRNA(Val) in a tRNA-dependent manner. The polypeptide is Valine--tRNA ligase (Ureaplasma parvum serovar 3 (strain ATCC 700970)).